The sequence spans 205 residues: Probable nicotinate-nucleotide adenylyltransferase (205 aa).

It belongs to the NadD family.

The catalysed reaction is nicotinate beta-D-ribonucleotide + ATP + H(+) = deamido-NAD(+) + diphosphate. It functions in the pathway cofactor biosynthesis; NAD(+) biosynthesis; deamido-NAD(+) from nicotinate D-ribonucleotide: step 1/1. Catalyzes the reversible adenylation of nicotinate mononucleotide (NaMN) to nicotinic acid adenine dinucleotide (NaAD). The protein is Probable nicotinate-nucleotide adenylyltransferase of Arthrobacter sp. (strain FB24).